A 945-amino-acid polypeptide reads, in one-letter code: Valine--tRNA ligase (945 aa).

The 'HIGH' region signature appears at 42-52 (PNVTGTLHMGH). A 'KMSKS' region motif is present at residues 552–556 (KMSKS). Lysine 555 is an ATP binding site. Residues 879–945 (DKATETARLS…VQTQLSKLKD (67 aa)) adopt a coiled-coil conformation.

This sequence belongs to the class-I aminoacyl-tRNA synthetase family. ValS type 1 subfamily. As to quaternary structure, monomer.

The protein resides in the cytoplasm. It carries out the reaction tRNA(Val) + L-valine + ATP = L-valyl-tRNA(Val) + AMP + diphosphate. Catalyzes the attachment of valine to tRNA(Val). As ValRS can inadvertently accommodate and process structurally similar amino acids such as threonine, to avoid such errors, it has a 'posttransfer' editing activity that hydrolyzes mischarged Thr-tRNA(Val) in a tRNA-dependent manner. This Neisseria meningitidis serogroup A / serotype 4A (strain DSM 15465 / Z2491) protein is Valine--tRNA ligase.